Reading from the N-terminus, the 145-residue chain is 3-hydroxyacyl-[acyl-carrier-protein] dehydratase FabZ (145 aa).

The active site involves His-49.

Belongs to the thioester dehydratase family. FabZ subfamily.

It localises to the cytoplasm. It catalyses the reaction a (3R)-hydroxyacyl-[ACP] = a (2E)-enoyl-[ACP] + H2O. Functionally, involved in unsaturated fatty acids biosynthesis. Catalyzes the dehydration of short chain beta-hydroxyacyl-ACPs and long chain saturated and unsaturated beta-hydroxyacyl-ACPs. The protein is 3-hydroxyacyl-[acyl-carrier-protein] dehydratase FabZ of Rickettsia peacockii (strain Rustic).